The chain runs to 617 residues: Solute carrier family 2, facilitated glucose transporter member 12 (617 aa).

The disordered stretch occupies residues methionine 1 to histidine 29. Residues methionine 1 to serine 44 are Cytoplasmic-facing. Residues glutamate 8–glycine 17 are compositionally biased toward polar residues. A helical membrane pass occupies residues valine 45–leucine 65. The Extracellular segment spans residues leucine 66–glutamate 80. The chain crosses the membrane as a helical span at residues methionine 81–isoleucine 101. Topologically, residues aspartate 102 to cysteine 115 are cytoplasmic. A helical transmembrane segment spans residues leucine 116–glycine 136. Residue arginine 137 is a topological domain, extracellular. Residues isoleucine 138–isoleucine 158 traverse the membrane as a helical segment. Residues alanine 159–glutamate 172 lie on the Cytoplasmic side of the membrane. A helical membrane pass occupies residues leucine 173–phenylalanine 193. The Extracellular segment spans residues histidine 194–lysine 197. A helical membrane pass occupies residues tyrosine 198–proline 218. At proline 219–arginine 278 the chain is on the cytoplasmic side. Residues isoleucine 279–phenylalanine 299 traverse the membrane as a helical segment. The Extracellular portion of the chain corresponds to tyrosine 300–serine 317. The helical transmembrane segment at leucine 318–valine 338 threads the bilayer. Residues aspartate 339–threonine 345 lie on the Cytoplasmic side of the membrane. The chain crosses the membrane as a helical span at residues phenylalanine 346–leucine 366. Residues asparagine 367 to alanine 466 lie on the Extracellular side of the membrane. Asparagine 371, asparagine 383, asparagine 396, and asparagine 401 each carry an N-linked (GlcNAc...) asparagine glycan. Residues serine 467–leucine 487 form a helical membrane-spanning segment. Topologically, residues serine 488–arginine 498 are cytoplasmic. A helical transmembrane segment spans residues alanine 499–leucine 519. The Extracellular portion of the chain corresponds to threonine 520 to proline 528. A helical membrane pass occupies residues tryptophan 529–isoleucine 549. Topologically, residues proline 550–threonine 617 are cytoplasmic.

This sequence belongs to the major facilitator superfamily. Sugar transporter (TC 2.A.1.1) family. Glucose transporter subfamily. Predominantly expressed in skeletal muscle, heart and prostate, with lower levels in brain, placenta and kidney.

The protein resides in the cell membrane. It localises to the endomembrane system. Its subcellular location is the cytoplasm. It is found in the perinuclear region. It carries out the reaction D-glucose(out) = D-glucose(in). Insulin-independent facilitative glucose transporter. This chain is Solute carrier family 2, facilitated glucose transporter member 12, found in Homo sapiens (Human).